The following is a 771-amino-acid chain: ATP-dependent DNA helicase UvrD1 (771 aa).

Residues 1-21 (MSVHATDAKPPGPSPADQLLD) form a disordered region. The region spanning 21-311 (DGLNPQQRQA…ILLEQNYRST (291 aa)) is the UvrD-like helicase ATP-binding domain. ATP is bound by residues 45–50 (GSGKTA) and Arg-309. Residues 312-603 (QNILSAANSV…TLMTLHTAKG (292 aa)) form the UvrD-like helicase C-terminal domain. Residues 691 to 716 (FSAPVSGAGRFGSARPSPTRSGASRR) are disordered.

This sequence belongs to the helicase family. UvrD subfamily. As to quaternary structure, monomer. Requires Mg(2+) as cofactor.

The enzyme catalyses Couples ATP hydrolysis with the unwinding of duplex DNA by translocating in the 3'-5' direction.. The catalysed reaction is ATP + H2O = ADP + phosphate + H(+). Its function is as follows. DNA-dependent ATPase, acting on dsDNA with a 3'-ssDNA tail, unwinding with 3'-to 5'-polarity. Also highly efficient on nicked DNA. Involved in the post-incision events of nucleotide excision repair. This Mycobacterium bovis (strain ATCC BAA-935 / AF2122/97) protein is ATP-dependent DNA helicase UvrD1 (uvrD1).